We begin with the raw amino-acid sequence, 1179 residues long: RecBCD enzyme subunit RecB (1179 aa).

Residues Met-1–Tyr-859 are DNA-binding and helicase activity, interacts with RecC. Residues Asn-18–Ser-459 form the UvrD-like helicase ATP-binding domain. Ala-39 to Thr-46 provides a ligand contact to ATP. The UvrD-like helicase C-terminal domain occupies Glu-485–Gly-755. The interval Tyr-910–Lys-1179 is nuclease activity, interacts with RecD and RecA. Mg(2+)-binding residues include His-962, Asp-1073, and Asp-1086. Residue Asp-1086 is the For nuclease activity of the active site.

Belongs to the helicase family. UvrD subfamily. As to quaternary structure, heterotrimer of RecB, RecC and RecD. All subunits contribute to DNA-binding. Interacts with RecA. Mg(2+) serves as cofactor.

It carries out the reaction Exonucleolytic cleavage (in the presence of ATP) in either 5'- to 3'- or 3'- to 5'-direction to yield 5'-phosphooligonucleotides.. The catalysed reaction is Couples ATP hydrolysis with the unwinding of duplex DNA by translocating in the 3'-5' direction.. The enzyme catalyses ATP + H2O = ADP + phosphate + H(+). In terms of biological role, a helicase/nuclease that prepares dsDNA breaks (DSB) for recombinational DNA repair. Binds to DSBs and unwinds DNA via a highly rapid and processive ATP-dependent bidirectional helicase activity. Unwinds dsDNA until it encounters a Chi (crossover hotspot instigator) sequence from the 3' direction. Cuts ssDNA a few nucleotides 3' to the Chi site. The properties and activities of the enzyme are changed at Chi. The Chi-altered holoenzyme produces a long 3'-ssDNA overhang and facilitates RecA-binding to the ssDNA for homologous DNA recombination and repair. Holoenzyme degrades any linearized DNA that is unable to undergo homologous recombination. In the holoenzyme this subunit contributes ATPase, 3'-5' helicase, exonuclease activity and loads RecA onto ssDNA. This Buchnera aphidicola subsp. Schizaphis graminum (strain Sg) protein is RecBCD enzyme subunit RecB.